The sequence spans 357 residues: Neutral protease 2 homolog UREG_02006 (357 aa).

An N-terminal signal peptide occupies residues 1-19; it reads MLFSSRFLALAALLGQALA. Residues 20 to 179 constitute a propeptide that is removed on maturation; that stretch reads LPIDDFSQSD…QSAVPTIEKR (160 aa). Cystine bridges form between Cys-187/Cys-259 and Cys-266/Cys-284. His-308 contributes to the Zn(2+) binding site. Residue Glu-309 is part of the active site. His-312 and Asp-323 together coordinate Zn(2+).

The protein belongs to the peptidase M35 family. The cofactor is Zn(2+).

The protein resides in the secreted. The catalysed reaction is Preferential cleavage of bonds with hydrophobic residues in P1'. Also 3-Asn-|-Gln-4 and 8-Gly-|-Ser-9 bonds in insulin B chain.. Secreted metalloproteinase that allows assimilation of proteinaceous substrates. Shows high activities on basic nuclear substrates such as histone and protamine. This Uncinocarpus reesii (strain UAMH 1704) protein is Neutral protease 2 homolog UREG_02006.